The primary structure comprises 175 residues: Putative lipoprotein LppN (175 aa).

The first 20 residues, 1 to 20 (MRLPGRHVLYALSAVTMLAA), serve as a signal peptide directing secretion. Cys21 is lipidated: N-palmitoyl cysteine. A lipid anchor (S-diacylglycerol cysteine) is attached at Cys21. Residues 31 to 56 (ASTNMNPTNPPATAETATVSPTPAPQ) form a disordered region. The span at 33-48 (TNMNPTNPPATAETAT) shows a compositional bias: low complexity. Prevents bacterial uptake by a human macrophage-like cell line stretches follow at residues 61–80 (ETWI…PADL), 101–120 (RAPV…DCAA), and 121–140 (GFAP…VAYL).

It is found in the cell membrane. The protein resides in the cell surface. Its function is as follows. Probably involved in bacterial recognition and uptake by its host (human). The polypeptide is Putative lipoprotein LppN (lppN) (Mycobacterium tuberculosis (strain ATCC 25618 / H37Rv)).